The primary structure comprises 310 residues: Syntaxin-81 (310 aa).

Residues 1–289 (MSRFRDRTED…QAIQRNSSSR (289 aa)) are Cytoplasmic-facing. Positions 77–114 (RTTEQEKDSIEQEVAAFIKACKEQIDILINSIRNEEAN) form a coiled coil. The chain crosses the membrane as a helical; Anchor for type IV membrane protein span at residues 290-310 (TFLLLFFFVLTFSVLFLDWYS).

This sequence belongs to the syntaxin family. Part of the t-SNARE complex. Interacts with MAG2.

The protein localises to the membrane. Vesicle trafficking protein that functions in the secretory pathway. In Arabidopsis thaliana (Mouse-ear cress), this protein is Syntaxin-81 (SYP81).